A 59-amino-acid chain; its full sequence is Dendroaspin (59 aa).

4 disulfides stabilise this stretch: Cys3–Cys22, Cys17–Cys37, Cys39–Cys51, and Cys52–Cys57. Positions 43–45 (RGD) match the Cell attachment site motif.

Belongs to the three-finger toxin family. Short-chain subfamily. Antiplatelet toxin sub-subfamily. Expressed by the venom gland.

Its subcellular location is the secreted. In terms of biological role, inhibits ADP-induced platelet aggregation and inhibits the binding of purified platelet fibrinogen receptor alpha-IIb/beta-3 (ITGA2B/ITGB3) to immobilized fibrinogen. Has also been described to inhibit cell adhesion to fibrinogen, fibronectin, laminin and collagen. The sequence is that of Dendroaspin from Dendroaspis jamesoni kaimosae (Eastern Jameson's mamba).